The primary structure comprises 215 residues: Protein-L-isoaspartate O-methyltransferase (215 aa).

Residue Ser62 is part of the active site.

It belongs to the methyltransferase superfamily. L-isoaspartyl/D-aspartyl protein methyltransferase family.

The protein resides in the cytoplasm. The catalysed reaction is [protein]-L-isoaspartate + S-adenosyl-L-methionine = [protein]-L-isoaspartate alpha-methyl ester + S-adenosyl-L-homocysteine. Catalyzes the methyl esterification of L-isoaspartyl residues in peptides and proteins that result from spontaneous decomposition of normal L-aspartyl and L-asparaginyl residues. It plays a role in the repair and/or degradation of damaged proteins. In Nitratidesulfovibrio vulgaris (strain DSM 19637 / Miyazaki F) (Desulfovibrio vulgaris), this protein is Protein-L-isoaspartate O-methyltransferase.